Reading from the N-terminus, the 649-residue chain is Thioredoxin reductase 1, cytoplasmic (649 aa).

M1 carries the N-acetylmethionine modification. A disordered region spans residues 1–49 (MGCAEGKAVAAAAPTELQTKGKNGDGRRRSAKDHHPGKTLPENPAGFTS). A compositionally biased stretch (basic and acidic residues) spans 22 to 36 (KNGDGRRRSAKDHHP). Residues 56–156 (RALLQAYIDG…KLLKMNGPED (101 aa)) enclose the Glutaredoxin domain. The interval 145 to 149 (LQKLL) is required for interaction with ESR1 and ESR2. Residues 172–173 (SG), 192–193 (DF), 208–209 (TC), and 213–217 (GCIPK) contribute to the FAD site. A disulfide bond links C209 and C214. K218 carries the post-translational modification N6-succinyllysine. A Phosphotyrosine modification is found at Y281. FAD-binding positions include 281–282 (YG) and T311. Residues R316, 348 to 354 (ASYVALE), 371 to 372 (RS), R376, 376 to 378 (RGF), 442 to 443 (GR), and K465 each bind NADP(+). Position 350 (Y350) interacts with FAD. FAD contacts are provided by residues D484, 491–493 (ELT), and H622. Residue E491 coordinates NADP(+). Residue H622 is the Proton acceptor of the active site. A cross-link (cysteinyl-selenocysteine (Cys-Sec)) is located at residues 647 to 648 (CU). Position 648 (U648) is a non-standard amino acid, selenocysteine.

Belongs to the class-I pyridine nucleotide-disulfide oxidoreductase family. Homodimer. Interacts with HERC5. As to quaternary structure, interacts with ESR1 and ESR2. Requires FAD as cofactor. In terms of processing, the N-terminus is blocked. ISGylated. As to expression, expressed predominantly in Leydig cells (at protein level). Also expressed in ovary, spleen, heart, liver, kidney and pancreas and in a number of cancer cell lines. In terms of tissue distribution, widely expressed with highest levels in kidney, testis, uterus, ovary, prostate, placenta and fetal liver.

The protein localises to the cytoplasm. It localises to the nucleus. The enzyme catalyses [thioredoxin]-dithiol + NADP(+) = [thioredoxin]-disulfide + NADPH + H(+). It catalyses the reaction H2O2 + NADPH + H(+) = NADP(+) + 2 H2O. Reduces disulfideprotein thioredoxin (Trx) to its dithiol-containing form. Homodimeric flavoprotein involved in the regulation of cellular redox reactions, growth and differentiation. Contains a selenocysteine residue at the C-terminal active site that is essential for catalysis. Also has reductase activity on hydrogen peroxide (H2O2). In terms of biological role, induces actin and tubulin polymerization, leading to formation of cell membrane protrusions. Its function is as follows. Enhances the transcriptional activity of estrogen receptors ESR1 and ESR2. Functionally, enhances the transcriptional activity of the estrogen receptor ESR2 only. Mediates cell death induced by a combination of interferon-beta and retinoic acid. In Homo sapiens (Human), this protein is Thioredoxin reductase 1, cytoplasmic.